Reading from the N-terminus, the 449-residue chain is Glucose-6-phosphate isomerase (449 aa).

Glu-290 serves as the catalytic Proton donor. Active-site residues include His-311 and Lys-425.

This sequence belongs to the GPI family.

The protein resides in the cytoplasm. It catalyses the reaction alpha-D-glucose 6-phosphate = beta-D-fructose 6-phosphate. The protein operates within carbohydrate biosynthesis; gluconeogenesis. Its pathway is carbohydrate degradation; glycolysis; D-glyceraldehyde 3-phosphate and glycerone phosphate from D-glucose: step 2/4. Catalyzes the reversible isomerization of glucose-6-phosphate to fructose-6-phosphate. The protein is Glucose-6-phosphate isomerase of Clostridioides difficile (strain 630) (Peptoclostridium difficile).